Here is a 559-residue protein sequence, read N- to C-terminus: Arginine--tRNA ligase (559 aa).

The 'HIGH' region signature appears at 116–126 (ANPNGPLHVGH).

This sequence belongs to the class-I aminoacyl-tRNA synthetase family.

The protein localises to the cytoplasm. The catalysed reaction is tRNA(Arg) + L-arginine + ATP = L-arginyl-tRNA(Arg) + AMP + diphosphate. This Methanosphaerula palustris (strain ATCC BAA-1556 / DSM 19958 / E1-9c) protein is Arginine--tRNA ligase.